A 156-amino-acid chain; its full sequence is SsrA-binding protein (156 aa).

Belongs to the SmpB family.

It localises to the cytoplasm. Functionally, required for rescue of stalled ribosomes mediated by trans-translation. Binds to transfer-messenger RNA (tmRNA), required for stable association of tmRNA with ribosomes. tmRNA and SmpB together mimic tRNA shape, replacing the anticodon stem-loop with SmpB. tmRNA is encoded by the ssrA gene; the 2 termini fold to resemble tRNA(Ala) and it encodes a 'tag peptide', a short internal open reading frame. During trans-translation Ala-aminoacylated tmRNA acts like a tRNA, entering the A-site of stalled ribosomes, displacing the stalled mRNA. The ribosome then switches to translate the ORF on the tmRNA; the nascent peptide is terminated with the 'tag peptide' encoded by the tmRNA and targeted for degradation. The ribosome is freed to recommence translation, which seems to be the essential function of trans-translation. In Clostridium beijerinckii (strain ATCC 51743 / NCIMB 8052) (Clostridium acetobutylicum), this protein is SsrA-binding protein.